A 778-amino-acid chain; its full sequence is Centromere/kinetochore protein zw10 homolog (778 aa).

The stretch at 47-99 forms a coiled coil; that stretch reads FDRLENLEDIAEMSTRNLSNLIDQTAKDSPEMLAEIKSQAQSCENLVEFLQSM.

The protein belongs to the ZW10 family. In terms of assembly, component of the RZZ complex composed of rod-1, czw-1 and zwl-1.

It is found in the chromosome. It localises to the centromere. The protein resides in the kinetochore. The protein localises to the cytoplasm. Its subcellular location is the cytoskeleton. It is found in the spindle. Its function is as follows. Essential component of the mitotic checkpoint, which prevents cells from prematurely exiting mitosis. Required for the assembly of the dynein-dynactin and mdf-1-mdf-2 complexes onto kinetochores. Its function related to the spindle assembly machinery and kinetochore-microtubule attachments likely depends on its association in the mitotic RZZ complex. The RZZ complex recruits the spindly-like protein spdl-1 to kinetochores. To prevent irregular chromosome segregation, the complex also inhibits the attachment of the kinetochore-associated NDC80 complex to microtubules. The recruitment of spdl-1 to kinetochores relieves this inhibition. Required for embryonic development. This Caenorhabditis elegans protein is Centromere/kinetochore protein zw10 homolog.